We begin with the raw amino-acid sequence, 159 residues long: ATP synthase subunit b (159 aa).

A helical membrane pass occupies residues 8-28 (ILATIINFIILILILKHFFWD).

Belongs to the ATPase B chain family. As to quaternary structure, F-type ATPases have 2 components, F(1) - the catalytic core - and F(0) - the membrane proton channel. F(1) has five subunits: alpha(3), beta(3), gamma(1), delta(1), epsilon(1). F(0) has three main subunits: a(1), b(2) and c(10-14). The alpha and beta chains form an alternating ring which encloses part of the gamma chain. F(1) is attached to F(0) by a central stalk formed by the gamma and epsilon chains, while a peripheral stalk is formed by the delta and b chains.

The protein localises to the cell membrane. Functionally, f(1)F(0) ATP synthase produces ATP from ADP in the presence of a proton or sodium gradient. F-type ATPases consist of two structural domains, F(1) containing the extramembraneous catalytic core and F(0) containing the membrane proton channel, linked together by a central stalk and a peripheral stalk. During catalysis, ATP synthesis in the catalytic domain of F(1) is coupled via a rotary mechanism of the central stalk subunits to proton translocation. Component of the F(0) channel, it forms part of the peripheral stalk, linking F(1) to F(0). In Clostridium perfringens (strain SM101 / Type A), this protein is ATP synthase subunit b.